The primary structure comprises 323 residues: Cytochrome c biogenesis protein CcsA (323 aa).

The next 8 membrane-spanning stretches (helical) occupy residues 18-38 (VSVV…VGLY), 43-63 (KGML…WVYW), 71-91 (LYES…IPSF), 99-119 (LNVI…SGLL), 146-166 (LGYA…IIIF), 227-247 (VISL…VWAN), 256-276 (WDPK…YLHI), and 288-308 (AIVA…VNLL).

It belongs to the CcmF/CycK/Ccl1/NrfE/CcsA family. May interact with Ccs1.

The protein resides in the plastid. It is found in the chloroplast thylakoid membrane. Its function is as follows. Required during biogenesis of c-type cytochromes (cytochrome c6 and cytochrome f) at the step of heme attachment. This is Cytochrome c biogenesis protein CcsA from Spinacia oleracea (Spinach).